Reading from the N-terminus, the 442-residue chain is GTPase Der (442 aa).

EngA-type G domains lie at 3-167 (PTIV…PADD) and 177-350 (PRVA…AAAM). GTP contacts are provided by residues 9 to 16 (GRPNVGKS), 56 to 60 (DTAGF), 119 to 122 (NKAE), 183 to 190 (GRPNVGKS), 230 to 234 (DTAGL), and 295 to 298 (NKWD). The 85-residue stretch at 351–435 (SNLSTPRLTR…PLRIQFRTAH (85 aa)) folds into the KH-like domain.

It belongs to the TRAFAC class TrmE-Era-EngA-EngB-Septin-like GTPase superfamily. EngA (Der) GTPase family. As to quaternary structure, associates with the 50S ribosomal subunit.

Functionally, GTPase that plays an essential role in the late steps of ribosome biogenesis. The protein is GTPase Der of Azoarcus sp. (strain BH72).